A 455-amino-acid polypeptide reads, in one-letter code: Argininosuccinate lyase (455 aa).

The protein belongs to the lyase 1 family. Argininosuccinate lyase subfamily.

The protein localises to the cytoplasm. The enzyme catalyses 2-(N(omega)-L-arginino)succinate = fumarate + L-arginine. It functions in the pathway amino-acid biosynthesis; L-arginine biosynthesis; L-arginine from L-ornithine and carbamoyl phosphate: step 3/3. The sequence is that of Argininosuccinate lyase from Caulobacter vibrioides (strain ATCC 19089 / CIP 103742 / CB 15) (Caulobacter crescentus).